The chain runs to 141 residues: Hemoglobin subunit alpha-1 (141 aa).

The 141-residue stretch at 1-141 (VLSEGNKKAI…VTYQLSSLYR (141 aa)) folds into the Globin domain. O2 is bound at residue His59. Position 88 (His88) interacts with heme b.

This sequence belongs to the globin family. In terms of assembly, heterotetramer of two alpha chains and two beta chains. In terms of tissue distribution, red blood cells.

Involved in oxygen transport from the lung to the various peripheral tissues. The sequence is that of Hemoglobin subunit alpha-1 from Torpedo marmorata (Marbled electric ray).